The chain runs to 275 residues: 2,3,4,5-tetrahydropyridine-2,6-dicarboxylate N-succinyltransferase (275 aa).

Substrate contacts are provided by Arg-106 and Asp-143.

The protein belongs to the transferase hexapeptide repeat family. In terms of assembly, homotrimer.

Its subcellular location is the cytoplasm. The catalysed reaction is (S)-2,3,4,5-tetrahydrodipicolinate + succinyl-CoA + H2O = (S)-2-succinylamino-6-oxoheptanedioate + CoA. It functions in the pathway amino-acid biosynthesis; L-lysine biosynthesis via DAP pathway; LL-2,6-diaminopimelate from (S)-tetrahydrodipicolinate (succinylase route): step 1/3. This is 2,3,4,5-tetrahydropyridine-2,6-dicarboxylate N-succinyltransferase from Burkholderia mallei (strain NCTC 10247).